Reading from the N-terminus, the 255-residue chain is 3-dehydroquinate dehydratase (255 aa).

3-dehydroquinate contacts are provided by residues 46 to 48 (EWR) and Arg82. Catalysis depends on His143, which acts as the Proton donor/acceptor. Lys170 serves as the catalytic Schiff-base intermediate with substrate. 3 residues coordinate 3-dehydroquinate: Arg213, Ser232, and Gln236.

This sequence belongs to the type-I 3-dehydroquinase family. In terms of assembly, homodimer.

It catalyses the reaction 3-dehydroquinate = 3-dehydroshikimate + H2O. It functions in the pathway metabolic intermediate biosynthesis; chorismate biosynthesis; chorismate from D-erythrose 4-phosphate and phosphoenolpyruvate: step 3/7. Its function is as follows. Involved in the third step of the chorismate pathway, which leads to the biosynthesis of aromatic amino acids. Catalyzes the cis-dehydration of 3-dehydroquinate (DHQ) and introduces the first double bond of the aromatic ring to yield 3-dehydroshikimate. This Bacillus subtilis (strain 168) protein is 3-dehydroquinate dehydratase.